Consider the following 86-residue polypeptide: Small ribosomal subunit protein bS20 (86 aa).

The protein belongs to the bacterial ribosomal protein bS20 family.

Its function is as follows. Binds directly to 16S ribosomal RNA. This Mycolicibacterium vanbaalenii (strain DSM 7251 / JCM 13017 / BCRC 16820 / KCTC 9966 / NRRL B-24157 / PYR-1) (Mycobacterium vanbaalenii) protein is Small ribosomal subunit protein bS20.